Consider the following 82-residue polypeptide: Sec-independent protein translocase protein TatA (82 aa).

Residues 2-22 (GFGGISLWQLLIVLAIIVLLF) form a helical membrane-spanning segment. The segment at 43–82 (KAMSDEKNTDKEKPEQIQKSEESAPLDSAHTEKNKDNNKV) is disordered. 2 stretches are compositionally biased toward basic and acidic residues: residues 44–64 (AMSD…KSEE) and 71–82 (AHTEKNKDNNKV).

It belongs to the TatA/E family. As to quaternary structure, the Tat system comprises two distinct complexes: a TatABC complex, containing multiple copies of TatA, TatB and TatC subunits, and a separate TatA complex, containing only TatA subunits. Substrates initially bind to the TatABC complex, which probably triggers association of the separate TatA complex to form the active translocon.

The protein localises to the cell inner membrane. In terms of biological role, part of the twin-arginine translocation (Tat) system that transports large folded proteins containing a characteristic twin-arginine motif in their signal peptide across membranes. TatA could form the protein-conducting channel of the Tat system. This is Sec-independent protein translocase protein TatA from Pseudoalteromonas translucida (strain TAC 125).